A 147-amino-acid polypeptide reads, in one-letter code: Large ribosomal subunit protein uL15 (147 aa).

Residues 1-58 (MRLHDLKPAEGSTKKKKRVGRGIGSGHGKTSGRGHKGQNARSGGGVRPGFEGGQMPLT) form a disordered region. Positions 42 to 52 (SGGGVRPGFEG) are enriched in gly residues.

It belongs to the universal ribosomal protein uL15 family. Part of the 50S ribosomal subunit.

Binds to the 23S rRNA. The polypeptide is Large ribosomal subunit protein uL15 (Caldanaerobacter subterraneus subsp. tengcongensis (strain DSM 15242 / JCM 11007 / NBRC 100824 / MB4) (Thermoanaerobacter tengcongensis)).